The following is a 218-amino-acid chain: Imidazole glycerol phosphate synthase subunit HisH (218 aa).

The Glutamine amidotransferase type-1 domain occupies 7 to 211; the sequence is STVIIDTGCA…LALDKASLDA (205 aa). The active-site Nucleophile is the Cys-82. Active-site residues include His-186 and Glu-188.

In terms of assembly, heterodimer of HisH and HisF.

The protein resides in the cytoplasm. It catalyses the reaction 5-[(5-phospho-1-deoxy-D-ribulos-1-ylimino)methylamino]-1-(5-phospho-beta-D-ribosyl)imidazole-4-carboxamide + L-glutamine = D-erythro-1-(imidazol-4-yl)glycerol 3-phosphate + 5-amino-1-(5-phospho-beta-D-ribosyl)imidazole-4-carboxamide + L-glutamate + H(+). It carries out the reaction L-glutamine + H2O = L-glutamate + NH4(+). It functions in the pathway amino-acid biosynthesis; L-histidine biosynthesis; L-histidine from 5-phospho-alpha-D-ribose 1-diphosphate: step 5/9. Functionally, IGPS catalyzes the conversion of PRFAR and glutamine to IGP, AICAR and glutamate. The HisH subunit catalyzes the hydrolysis of glutamine to glutamate and ammonia as part of the synthesis of IGP and AICAR. The resulting ammonia molecule is channeled to the active site of HisF. The chain is Imidazole glycerol phosphate synthase subunit HisH from Shewanella sediminis (strain HAW-EB3).